The following is a 263-amino-acid chain: Insulin-like growth factor-binding protein 1 (263 aa).

Residues 1–25 (MPEVLAVRAWPLLLSLAVQLGATVG) form the signal peptide. In terms of domain architecture, IGFBP N-terminal spans 28–109 (QPWRCAPCSA…TRGQGACMTT (82 aa)). 6 cysteine pairs are disulfide-bonded: C32–C59, C35–C61, C43–C62, C50–C65, C73–C86, and C80–C106. Residues 102-131 (GQGACMTTPSDEATDTKDTTSPENVSPESS) form a disordered region. S122, S127, S130, S148, and S160 each carry phosphoserine. Polar residues predominate over residues 122 to 131 (SPENVSPESS). Y162 bears the Phosphotyrosine mark. The region spanning 177–255 (KEPCQRELYK…SVAVRGDPKC (79 aa)) is the Thyroglobulin type-1 domain. 3 cysteine pairs are disulfide-bonded: C180–C210, C221–C232, and C234–C255. S246 carries the phosphoserine modification. The Cell attachment site motif lies at 250–252 (RGD).

In terms of assembly, binds equally well IGF1 and IGF2. Interacts with integrin ITGA5:ITGB1. Interacts with VHL; this interaction inhibits HIF1A degradation.

The protein resides in the secreted. Multifunctional protein that plays a critical role in regulating the availability of IGFs such as IGF1 and IGF2 to their receptors and thereby regulates IGF-mediated cellular processes including cell migration, proliferation, differentiation or apoptosis in a cell-type specific manner. Also plays a positive role in cell migration by interacting with integrin ITGA5:ITGB1 through its RGD motif. Mechanistically, binding to integrins leads to activation of focal adhesion kinase/PTK2 and stimulation of the mitogen-activated protein kinase (MAPK) pathway. Regulates cardiomyocyte apoptosis by suppressing HIF-1alpha/HIF1A degradation through ubiquitination. In Bos taurus (Bovine), this protein is Insulin-like growth factor-binding protein 1 (IGFBP1).